The sequence spans 799 residues: Potassium transporter 21 (799 aa).

Over 1–56 the chain is Cytoplasmic; sequence MDPGVEKKKQQMELVDVESGGLPVERQDSLFREAVRAEHAGAAHWDEQDSWGRTMS. Residues 57–77 traverse the membrane as a helical segment; sequence LAFQCVGILYGDIGTSSLYVY. Topologically, residues 78 to 93 are extracellular; sequence SSTFEHGIGHPDDVVG. Residues 94 to 114 form a helical membrane-spanning segment; the sequence is VLSLIVYSFMLFTVIKIVFVA. Topologically, residues 115 to 181 are cytoplasmic; it reads LHANDHGDGG…QLLEASKAAK (67 aa). A helical transmembrane segment spans residues 182–202; that stretch reads ISLFLLTILAIAMVISDAVLT. The Extracellular portion of the chain corresponds to 203-219; that stretch reads PPISVLSAVGGLREKVP. Residues 220-240 form a helical membrane-spanning segment; sequence HLTTDQIVWITVAILVVLFAI. The Cytoplasmic portion of the chain corresponds to 241–251; the sequence is QRYGTDKVGYS. The chain crosses the membrane as a helical span at residues 252-272; that stretch reads FAPIILLWLLLIGATGLYNLI. Over 273 to 301 the chain is Extracellular; sequence KHDISVLRAFNPKYIIDYFRRNKKEGWVS. A helical transmembrane segment spans residues 302-322; that stretch reads LGSILLCFTGSEALFANLGYF. Residues 323–328 are Cytoplasmic-facing; it reads SIRSIQ. Residues 329-349 form a helical membrane-spanning segment; sequence LSFSFALLPSVLLTYIGQAAF. Residues 350–362 are Extracellular-facing; sequence LSKNPKNVANTFF. A helical membrane pass occupies residues 363–383; the sequence is AATPISLFWPTFIMAIAASII. Residues 384 to 420 are Cytoplasmic-facing; sequence GSQAMISCAFATVSHLQSLSCFPRVKILHTSKRFPGQ. Residues 421–441 form a helical membrane-spanning segment; sequence LYIPGVNFLLCVAACVVTVSF. Residues 442–452 are Extracellular-facing; sequence KTTVIIGKAHE. The chain crosses the membrane as a helical span at residues 453 to 473; that stretch reads ICVILVMIITTLLMTIVMLLV. At 474 to 475 the chain is on the cytoplasmic side; it reads WK. A helical transmembrane segment spans residues 476–496; that stretch reads INILWVALFFITFTSTEAVYL. Residues 497–508 are Extracellular-facing; sequence SSVLYKFTHGPY. A helical membrane pass occupies residues 509-529; sequence VPVAMSVVLMVVMIVWHYVHV. Residues 530-799 lie on the Cytoplasmic side of the membrane; it reads KRYKYELEHT…LLKVGISYEI (270 aa).

It belongs to the HAK/KUP transporter (TC 2.A.72.3) family.

The protein localises to the membrane. Functionally, high-affinity potassium transporter. The sequence is that of Potassium transporter 21 (HAK21) from Oryza sativa subsp. japonica (Rice).